The chain runs to 221 residues: Translation initiation factor 6 (221 aa).

The protein belongs to the eIF-6 family.

Its function is as follows. Binds to the 50S ribosomal subunit and prevents its association with the 30S ribosomal subunit to form the 70S initiation complex. The chain is Translation initiation factor 6 from Natronomonas pharaonis (strain ATCC 35678 / DSM 2160 / CIP 103997 / JCM 8858 / NBRC 14720 / NCIMB 2260 / Gabara) (Halobacterium pharaonis).